The sequence spans 414 residues: Serine/threonine transporter SstT (414 aa).

The next 9 helical transmembrane spans lie at 19 to 39 (IIVG…LEPV), 55 to 75 (FVKG…IAAI), 89 to 109 (IVML…LASF), 148 to 168 (ALAT…GIAL), 189 to 209 (IVHL…AATL), 223 to 243 (LLLV…PFIV), 297 to 317 (IPLG…VLTL), 323 to 343 (LGIP…AVCA), and 363 to 383 (LFGI…VIGV).

Belongs to the dicarboxylate/amino acid:cation symporter (DAACS) (TC 2.A.23) family.

Its subcellular location is the cell inner membrane. It carries out the reaction L-serine(in) + Na(+)(in) = L-serine(out) + Na(+)(out). The enzyme catalyses L-threonine(in) + Na(+)(in) = L-threonine(out) + Na(+)(out). Involved in the import of serine and threonine into the cell, with the concomitant import of sodium (symport system). The polypeptide is Serine/threonine transporter SstT (Actinobacillus succinogenes (strain ATCC 55618 / DSM 22257 / CCUG 43843 / 130Z)).